Reading from the N-terminus, the 282-residue chain is Pantothenate synthetase (282 aa).

Residue 30–37 participates in ATP binding; that stretch reads MGYFHEGH. His37 serves as the catalytic Proton donor. Residue Gln61 coordinates (R)-pantoate. Gln61 contributes to the beta-alanine binding site. 147-150 lines the ATP pocket; that stretch reads GQKD. Gln153 contacts (R)-pantoate. Residues Val176 and 184 to 187 each bind ATP; that span reads LSSR.

This sequence belongs to the pantothenate synthetase family. Homodimer.

It localises to the cytoplasm. The catalysed reaction is (R)-pantoate + beta-alanine + ATP = (R)-pantothenate + AMP + diphosphate + H(+). The protein operates within cofactor biosynthesis; (R)-pantothenate biosynthesis; (R)-pantothenate from (R)-pantoate and beta-alanine: step 1/1. Catalyzes the condensation of pantoate with beta-alanine in an ATP-dependent reaction via a pantoyl-adenylate intermediate. The protein is Pantothenate synthetase of Maridesulfovibrio salexigens (strain ATCC 14822 / DSM 2638 / NCIMB 8403 / VKM B-1763) (Desulfovibrio salexigens).